The following is a 494-amino-acid chain: Lysine--tRNA ligase (494 aa).

2 residues coordinate Mg(2+): glutamate 407 and glutamate 414.

The protein belongs to the class-II aminoacyl-tRNA synthetase family. As to quaternary structure, homodimer. The cofactor is Mg(2+).

It localises to the cytoplasm. The enzyme catalyses tRNA(Lys) + L-lysine + ATP = L-lysyl-tRNA(Lys) + AMP + diphosphate. This chain is Lysine--tRNA ligase, found in Lactococcus lactis subsp. cremoris (strain SK11).